The primary structure comprises 779 residues: Ribosome-releasing factor 2, mitochondrial (779 aa).

The tr-type G domain maps to 68-353 (AKIRNIGIMA…AVTTYLPSPE (286 aa)). GTP contacts are provided by residues 77–84 (AHIDAGKT), 141–145 (DTPGH), and 195–198 (NKMD).

It belongs to the TRAFAC class translation factor GTPase superfamily. Classic translation factor GTPase family. EF-G/EF-2 subfamily.

It is found in the mitochondrion. It carries out the reaction GTP + H2O = GDP + phosphate + H(+). In terms of biological role, mitochondrial GTPase that mediates the disassembly of ribosomes from messenger RNA at the termination of mitochondrial protein biosynthesis. Acts in collaboration with MRRF. GTP hydrolysis follows the ribosome disassembly and probably occurs on the ribosome large subunit. Not involved in the GTP-dependent ribosomal translocation step during translation elongation. The chain is Ribosome-releasing factor 2, mitochondrial (Gfm2) from Mus musculus (Mouse).